Consider the following 326-residue polypeptide: MASVTNLVDSIVVVECGERWRARAEAAGRLLVLINNHTVELSGEHGSAGEFYSVLTDVGVRVACSSGYAIVLTQISGLLPVEPEPGNFSNVTFPENSAKYYTAYGIVDSGYRGVVKAVQFAPGINTSVPPGQMSLGLVLVKLARKSIHVTSIGSTRDGRTSEANLFYDYFAPKRVEDAGYDISAPEDATIDPDESHFVDLPIVFANSNPAVTPCIFGRSSMNRRGLIVLPTRWVAGRTCCFFILNVNKYPVSITKGQRVAQLLLTEDIDDALIPPTVNYDNPFPTYSPSESTKAPQSPVLWKFTTDFDREAPSSLRADGGFGSTGL.

Residues 218-220 (RSS) and 321-322 (FG) contribute to the substrate site.

Belongs to the dUTPase family. Requires Mg(2+) as cofactor.

The catalysed reaction is dUTP + H2O = dUMP + diphosphate + H(+). Its function is as follows. Involved in nucleotide metabolism: produces dUMP, the immediate precursor of thymidine nucleotides and decreases the intracellular concentration of dUTP to avoid uracil incorporation into viral DNA. The protein is Deoxyuridine 5'-triphosphate nucleotidohydrolase of Equus caballus (Horse).